The following is a 438-amino-acid chain: 3-phosphoshikimate 1-carboxyvinyltransferase (438 aa).

The 3-phosphoshikimate site is built by Lys-26, Ser-27, and Arg-31. Lys-26 contributes to the phosphoenolpyruvate binding site. Positions 99 and 127 each coordinate phosphoenolpyruvate. The 3-phosphoshikimate site is built by Ser-172, Gln-174, Asp-320, and Lys-347. Gln-174 is a binding site for phosphoenolpyruvate. Residue Asp-320 is the Proton acceptor of the active site. Phosphoenolpyruvate is bound by residues Arg-351 and Arg-392.

Belongs to the EPSP synthase family. In terms of assembly, monomer.

It is found in the cytoplasm. The enzyme catalyses 3-phosphoshikimate + phosphoenolpyruvate = 5-O-(1-carboxyvinyl)-3-phosphoshikimate + phosphate. Its pathway is metabolic intermediate biosynthesis; chorismate biosynthesis; chorismate from D-erythrose 4-phosphate and phosphoenolpyruvate: step 6/7. In terms of biological role, catalyzes the transfer of the enolpyruvyl moiety of phosphoenolpyruvate (PEP) to the 5-hydroxyl of shikimate-3-phosphate (S3P) to produce enolpyruvyl shikimate-3-phosphate and inorganic phosphate. The polypeptide is 3-phosphoshikimate 1-carboxyvinyltransferase (Xanthomonas campestris pv. campestris (strain B100)).